The chain runs to 419 residues: DNA ligase (419 aa).

The tract at residues methionine 1–asparagine 120 is NTD. The interval threonine 121–leucine 317 is AD domain. Lysine 151 acts as the N6-AMP-lysine intermediate in catalysis. Positions lysine 318–isoleucine 419 are OB domain.

The protein belongs to the ATP-dependent DNA ligase family.

Its subcellular location is the virion. It carries out the reaction ATP + (deoxyribonucleotide)n-3'-hydroxyl + 5'-phospho-(deoxyribonucleotide)m = (deoxyribonucleotide)n+m + AMP + diphosphate.. Functionally, very low-fidelity DNA ligase that seals nicks in double-stranded DNA during DNA repair. Together with the viral repair DNA polymerase X, fills the single nucleotide gaps generated by the AP endonuclease. It is not essential for viral replication and recombination. Displays a very low adenylation activity towards DNA with 3'-dideoxy- or 3'-amino-terminated nicks compared to regular nick DNA. The chain is DNA ligase from Ornithodoros (relapsing fever ticks).